The following is a 117-amino-acid chain: Bomanin Bicipital 1 (117 aa).

The N-terminal stretch at 1–20 (MKCLILSFAIFVVLASQATA) is a signal peptide. 2 cysteine pairs are disulfide-bonded: Cys-29/Cys-32 and Cys-107/Cys-110.

Belongs to the bomanin family. In terms of tissue distribution, hemolymph (at protein level).

Its subcellular location is the secreted. In terms of biological role, secreted immune-induced peptide induced by Toll signaling. Has a role in resistance to bacterial and fungal infections. The sequence is that of Bomanin Bicipital 1 from Drosophila melanogaster (Fruit fly).